The chain runs to 182 residues: Ribosome-recycling factor (182 aa).

It belongs to the RRF family.

The protein resides in the cytoplasm. Functionally, responsible for the release of ribosomes from messenger RNA at the termination of protein biosynthesis. May increase the efficiency of translation by recycling ribosomes from one round of translation to another. This Thermosynechococcus vestitus (strain NIES-2133 / IAM M-273 / BP-1) protein is Ribosome-recycling factor.